We begin with the raw amino-acid sequence, 296 residues long: Nucleotide-binding protein SZO_12220 (296 aa).

13–20 lines the ATP pocket; that stretch reads GMSGAGKT. 63–66 is a GTP binding site; sequence DMRS.

Belongs to the RapZ-like family.

Its function is as follows. Displays ATPase and GTPase activities. The polypeptide is Nucleotide-binding protein SZO_12220 (Streptococcus equi subsp. zooepidemicus (strain H70)).